A 371-amino-acid polypeptide reads, in one-letter code: Fe(3+) ions import ATP-binding protein FbpC (371 aa).

In terms of domain architecture, ABC transporter spans 5-235; it reads IKIENAQKRY…PANLFVATFI (231 aa). 37–44 is a binding site for ATP; that stretch reads GPSGCGKT.

It belongs to the ABC transporter superfamily. Fe(3+) ion importer (TC 3.A.1.10) family. As to quaternary structure, the complex is composed of two ATP-binding proteins (FbpC), two transmembrane proteins (FbpB) and a solute-binding protein (FbpA).

The protein resides in the cell inner membrane. The enzyme catalyses Fe(3+)(out) + ATP + H2O = Fe(3+)(in) + ADP + phosphate + H(+). In terms of biological role, part of the ABC transporter complex FbpABC involved in Fe(3+) ions import. Responsible for energy coupling to the transport system. The sequence is that of Fe(3+) ions import ATP-binding protein FbpC from Fusobacterium nucleatum subsp. nucleatum (strain ATCC 25586 / DSM 15643 / BCRC 10681 / CIP 101130 / JCM 8532 / KCTC 2640 / LMG 13131 / VPI 4355).